We begin with the raw amino-acid sequence, 855 residues long: DNA polymerase (855 aa).

The 3'-5' exonuclease domain maps to 107–332; it reads KPEMKPVFDA…LHNFFLPKIE (226 aa). Residues 333–833 are polymerase; sequence KNEKLCSLYY…MDKEHPDHSK (501 aa).

It belongs to the DNA polymerase type-A family. Single-chain monomer with multiple functions.

The catalysed reaction is DNA(n) + a 2'-deoxyribonucleoside 5'-triphosphate = DNA(n+1) + diphosphate. Its function is as follows. Replicates the viral genomic DNA. This polymerase possesses two enzymatic activities: DNA synthesis (polymerase) and an exonucleolytic activity that degrades single-stranded DNA in the 3'-5' direction for proofreading purpose. The DNA synthesis very likely occurs by strand displacement. This Escherichia phage T5 (Enterobacteria phage T5) protein is DNA polymerase.